Reading from the N-terminus, the 282-residue chain is Sulfur carrier protein FdhD (282 aa).

Cysteine 115 functions as the Cysteine persulfide intermediate in the catalytic mechanism.

It belongs to the FdhD family.

The protein resides in the cytoplasm. Its function is as follows. Required for formate dehydrogenase (FDH) activity. Acts as a sulfur carrier protein that transfers sulfur from IscS to the molybdenum cofactor prior to its insertion into FDH. The sequence is that of Sulfur carrier protein FdhD from Streptomyces avermitilis (strain ATCC 31267 / DSM 46492 / JCM 5070 / NBRC 14893 / NCIMB 12804 / NRRL 8165 / MA-4680).